A 106-amino-acid polypeptide reads, in one-letter code: uncharacterized protein (106 aa).

This is an uncharacterized protein from Escherichia coli O157:H7.